The following is a 278-amino-acid chain: NAD kinase (278 aa).

Asp56 (proton acceptor) is an active-site residue. Residues 56–57 (DG), 132–133 (NE), Arg158, Asp160, and 171–176 (TAYNKS) each bind NAD(+).

Belongs to the NAD kinase family. It depends on a divalent metal cation as a cofactor.

The protein resides in the cytoplasm. It catalyses the reaction NAD(+) + ATP = ADP + NADP(+) + H(+). Functionally, involved in the regulation of the intracellular balance of NAD and NADP, and is a key enzyme in the biosynthesis of NADP. Catalyzes specifically the phosphorylation on 2'-hydroxyl of the adenosine moiety of NAD to yield NADP. The protein is NAD kinase of Streptococcus agalactiae serotype V (strain ATCC BAA-611 / 2603 V/R).